The sequence spans 517 residues: Succinyl-CoA:3-ketoacid coenzyme A transferase 2, mitochondrial (517 aa).

The transit peptide at 1 to 39 (MAALRLLASVLGRGVPAGGSGLALSQGCARCFATSPRLR) directs the protein to the mitochondrion. The active-site 5-glutamyl coenzyme A thioester intermediate is glutamate 341.

It belongs to the 3-oxoacid CoA-transferase family. As to quaternary structure, homodimer. As to expression, testis specific.

The protein resides in the mitochondrion. The catalysed reaction is a 3-oxo acid + succinyl-CoA = a 3-oxoacyl-CoA + succinate. Its pathway is ketone metabolism; succinyl-CoA degradation; acetoacetyl-CoA from succinyl-CoA: step 1/1. Its function is as follows. Key enzyme for ketone body catabolism. Transfers the CoA moiety from succinate to acetoacetate. Formation of the enzyme-CoA intermediate proceeds via an unstable anhydride species formed between the carboxylate groups of the enzyme and substrate. This Homo sapiens (Human) protein is Succinyl-CoA:3-ketoacid coenzyme A transferase 2, mitochondrial (OXCT2).